A 584-amino-acid chain; its full sequence is Potassium-transporting ATPase potassium-binding subunit (584 aa).

A run of 10 helical transmembrane segments spans residues 8-28 (FLVL…EFMF), 65-85 (SFAV…FILQ), 139-159 (VQNF…IYGF), 172-192 (VLLL…ALVL), 262-282 (FTDL…CFMF), 292-312 (GIAI…LGIW), 398-418 (GLYC…LMVG), 440-460 (ILIP…ITAG), 507-527 (MFVG…AFVA), and 544-564 (LFII…FLPA).

It belongs to the KdpA family. In terms of assembly, the system is composed of three essential subunits: KdpA, KdpB and KdpC.

It is found in the cell membrane. In terms of biological role, part of the high-affinity ATP-driven potassium transport (or Kdp) system, which catalyzes the hydrolysis of ATP coupled with the electrogenic transport of potassium into the cytoplasm. This subunit binds the extracellular potassium ions and delivers the ions to the membrane domain of KdpB through an intramembrane tunnel. In Methanoregula boonei (strain DSM 21154 / JCM 14090 / 6A8), this protein is Potassium-transporting ATPase potassium-binding subunit.